The chain runs to 145 residues: Large ribosomal subunit protein uL13 (145 aa).

It belongs to the universal ribosomal protein uL13 family. Part of the 50S ribosomal subunit.

Its function is as follows. This protein is one of the early assembly proteins of the 50S ribosomal subunit, although it is not seen to bind rRNA by itself. It is important during the early stages of 50S assembly. The protein is Large ribosomal subunit protein uL13 of Listeria monocytogenes serotype 4b (strain CLIP80459).